Reading from the N-terminus, the 104-residue chain is Pyrimidine/purine nucleoside phosphorylase (104 aa).

This sequence belongs to the nucleoside phosphorylase PpnP family.

The enzyme catalyses a purine D-ribonucleoside + phosphate = a purine nucleobase + alpha-D-ribose 1-phosphate. The catalysed reaction is adenosine + phosphate = alpha-D-ribose 1-phosphate + adenine. It catalyses the reaction cytidine + phosphate = cytosine + alpha-D-ribose 1-phosphate. It carries out the reaction guanosine + phosphate = alpha-D-ribose 1-phosphate + guanine. The enzyme catalyses inosine + phosphate = alpha-D-ribose 1-phosphate + hypoxanthine. The catalysed reaction is thymidine + phosphate = 2-deoxy-alpha-D-ribose 1-phosphate + thymine. It catalyses the reaction uridine + phosphate = alpha-D-ribose 1-phosphate + uracil. It carries out the reaction xanthosine + phosphate = alpha-D-ribose 1-phosphate + xanthine. Catalyzes the phosphorolysis of diverse nucleosides, yielding D-ribose 1-phosphate and the respective free bases. Can use uridine, adenosine, guanosine, cytidine, thymidine, inosine and xanthosine as substrates. Also catalyzes the reverse reactions. The protein is Pyrimidine/purine nucleoside phosphorylase of Thiobacillus denitrificans (strain ATCC 25259 / T1).